A 49-amino-acid polypeptide reads, in one-letter code: Protein YdfW (49 aa).

The interval 16 to 49 (PKADHPWLTRRTQSHQQVKPPKLPKKKPDPDKKD) is disordered.

In terms of biological role, may be involved in H(2) production during fermentative growth. The sequence is that of Protein YdfW (ydfW) from Escherichia coli (strain K12).